Here is a 469-residue protein sequence, read N- to C-terminus: Uronate isomerase (469 aa).

Belongs to the metallo-dependent hydrolases superfamily. Uronate isomerase family.

The enzyme catalyses D-glucuronate = D-fructuronate. It carries out the reaction aldehydo-D-galacturonate = keto-D-tagaturonate. It participates in carbohydrate metabolism; pentose and glucuronate interconversion. The sequence is that of Uronate isomerase from Edwardsiella ictaluri (strain 93-146).